The following is a 247-amino-acid chain: Ribonuclease PH (247 aa).

Phosphate contacts are provided by residues arginine 87 and 125–127 (GTR).

The protein belongs to the RNase PH family. In terms of assembly, homohexameric ring arranged as a trimer of dimers.

It catalyses the reaction tRNA(n+1) + phosphate = tRNA(n) + a ribonucleoside 5'-diphosphate. Phosphorolytic 3'-5' exoribonuclease that plays an important role in tRNA 3'-end maturation. Removes nucleotide residues following the 3'-CCA terminus of tRNAs; can also add nucleotides to the ends of RNA molecules by using nucleoside diphosphates as substrates, but this may not be physiologically important. Probably plays a role in initiation of 16S rRNA degradation (leading to ribosome degradation) during starvation. The chain is Ribonuclease PH from Frankia casuarinae (strain DSM 45818 / CECT 9043 / HFP020203 / CcI3).